The chain runs to 398 residues: L-rhamnonate dehydratase (398 aa).

His-22 and Arg-48 together coordinate substrate. Residues Asp-214, Glu-241, and Glu-269 each coordinate Mg(2+). Residue His-319 is the Proton acceptor of the active site. Residue Glu-339 coordinates substrate.

Belongs to the mandelate racemase/muconate lactonizing enzyme family. RhamD subfamily. As to quaternary structure, homooctamer; tetramer of dimers. Requires Mg(2+) as cofactor.

The catalysed reaction is L-rhamnonate = 2-dehydro-3-deoxy-L-rhamnonate + H2O. Functionally, catalyzes the dehydration of L-rhamnonate to 2-keto-3-deoxy-L-rhamnonate (KDR). The protein is L-rhamnonate dehydratase of Verminephrobacter eiseniae (strain EF01-2).